Consider the following 291-residue polypeptide: Tryptophan 2,3-dioxygenase (291 aa).

Residues 51 to 55 (FIIQH), Tyr113, and Arg117 each bind substrate. His240 is a heme binding site. Thr254 is a substrate binding site.

It belongs to the tryptophan 2,3-dioxygenase family. As to quaternary structure, homotetramer. It depends on heme as a cofactor.

The enzyme catalyses L-tryptophan + O2 = N-formyl-L-kynurenine. It participates in amino-acid degradation; L-tryptophan degradation via kynurenine pathway; L-kynurenine from L-tryptophan: step 1/2. Heme-dependent dioxygenase that catalyzes the oxidative cleavage of the L-tryptophan (L-Trp) pyrrole ring and converts L-tryptophan to N-formyl-L-kynurenine. Catalyzes the oxidative cleavage of the indole moiety. The polypeptide is Tryptophan 2,3-dioxygenase (Myxococcus xanthus (strain DK1622)).